We begin with the raw amino-acid sequence, 6930 residues long: Replicase polyprotein 1ab (6930 aa).

The CoV Nsp1 globular domain maps to 10 to 131; sequence LKSMVVTTLK…DIDIQIRKYG (122 aa). The region spanning 149 to 175 is the BetaCoV Nsp1 C-terminal domain; that stretch reads DPGPDVGPYLDFPDNCCPTKPKAKRGG. In terms of domain architecture, CoV Nsp2 N-terminal spans 177–431; that stretch reads VYLSDQYGFD…ELVEYLIEGI (255 aa). The Zn(2+) site is built by Cys-312, Cys-315, Cys-331, and Cys-333. Residues 312-333 form a C4 region; the sequence is CSYCDYYGWTPLKDIGTVNCLC. The 213-residue stretch at 432–644 folds into the CoV Nsp2 middle domain; it reads RVDADTLDNP…CDLLTTIMSK (213 aa). Positions 646–772 constitute a CoV Nsp2 C-terminal domain; sequence LTSVKWAGCK…LGKAFRLRGG (127 aa). The region spanning 775 to 885 is the Ubiquitin-like 1 domain; that stretch reads SKVTFGDEEV…MYFSLEDAVP (111 aa). The 168-residue stretch at 930–1097 folds into the Macro 1 domain; that stretch reads MTTPCGYTKI…LYERALATSF (168 aa). The tract at residues 1188–1207 is disordered; it reads KRPPPIVPQQTVEQQPQEIS. Over residues 1195 to 1206 the composition is skewed to low complexity; sequence PQQTVEQQPQEI. The 125-residue stretch at 1216 to 1340 folds into the Macro 2 domain; it reads LVDVVSMSFS…LYRAYFNGVF (125 aa). The DPUP domain maps to 1345-1417; that stretch reads TAVQDFVVDI…VSKARAYLET (73 aa). The Ubiquitin-like 2 domain occupies 1423–1478; the sequence is EPLIKVLTTVDGINYSTVLVSTAQSYRAQIGTVFCDGHDWSNKNPMPTDEGTHLYK. The region spanning 1492–1757 is the Peptidase C16 domain; sequence EYYGVDDSNI…RTTIDPDFSK (266 aa). Residue Cys-1533 is the For PL-PRO activity of the active site. Positions 1610, 1613, 1645, and 1647 each coordinate Zn(2+). The C4-type zinc finger occupies 1610–1647; the sequence is CEHCGVSQMVFTGTDACTFYGSVVLDDLYAPVSVVCQC. Catalysis depends on for PL-PRO activity residues His-1694 and Asp-1708. Positions 1770–1870 constitute a Nucleic acid-binding domain; that stretch reads PIEVVAAPKL…PLLSTVVVNT (101 aa). A G2M domain is found at 1883–2012; the sequence is PVNNETSEEP…KTADFVRSTN (130 aa). 3 helical membrane passes run 2015–2035, 2040–2060, and 2081–2101; these read SKCVGLLCLFYQLFMRFWLLV, IVKVSGIIAYNTGCGVTTCVL, and YMLYIWFVWTCLTICGVWLSE. Positions 2015 to 2238 are HD1; it reads SKCVGLLCLF…IVIAFLWLCY (224 aa). Positions 2105–2162 constitute a 3Ecto domain; that stretch reads PSLVTRFKYFLGIVMPCDYVLVNETGTGWLHHLCMAGMDSLDYPALRMQQHRYGSPYN. A disulfide bridge links Cys-2121 with Cys-2138. The next 3 helical transmembrane spans lie at 2162 to 2182, 2183 to 2203, and 2218 to 2238; these read NYTYILMLLEAFFAYLLYTPA, LPIVGILAVLHLIVLYLPIPL, and LVPFTSMLRMYIVIAFLWLCY. Positions 2239-2329 are Y1; the sequence is KGFLHVRYGC…QFKRPIIHTD (91 aa). The 372-residue stretch at 2239–2610 folds into the CoV Nsp3 Y domain; the sequence is KGFLHVRYGC…MVTPFKIIGG (372 aa). 8 residues coordinate Zn(2+): His-2243, Cys-2248, Cys-2253, Cys-2256, Cys-2289, His-2292, Cys-2296, and Cys-2299. The ZF1 stretch occupies residues 2243-2256; that stretch reads HVRYGCNNVACLMC. The ZF2 stretch occupies residues 2289–2299; sequence CTKHNWNCVSC. The tract at residues 2330–2425 is Y2; that stretch reads EAYYEVTSVE…LVDKRMVGVV (96 aa). The coV-Y stretch occupies residues 2330–2610; the sequence is EAYYEVTSVE…MVTPFKIIGG (281 aa). The Y3 stretch occupies residues 2426–2509; that stretch reads GDDATIARAM…SCIRLCHQEG (84 aa). The segment at 2510–2610 is Y4; sequence WEWTTDSWNN…MVTPFKIIGG (101 aa). A run of 7 helical transmembrane segments spans residues 2621–2641, 2719–2739, 2865–2885, 2887–2907, 2916–2936, 2946–2966, and 2970–2990; these read LIHVFMLLVVLNPQWFTPWYI, VGTTLLPLVNYGLGAVGSVCY, AFDLFMNMLLPIFTPVGAVDI, TSILMGALLAVVVSMSLYYLL, YSGVIFTNILAFVLNVIVLCL, IYAMVFLYATCYFGSDIACMM, and FLIMFAGVVPLWVTVLYIVVV. The segment at 2621 to 2990 is HD2; the sequence is LIHVFMLLVV…WVTVLYIVVV (370 aa). Residues 3007-3103 enclose the Nsp4C domain; it reads VQVGDLAFHS…RCSVASAALQ (97 aa). Residues 3104–3409 enclose the Peptidase C30 domain; that stretch reads AGLTRMAHPS…GRQMLGVKLQ (306 aa). Residues His-3144 and Cys-3248 each act as for 3CL-PRO activity in the active site. 7 consecutive transmembrane segments (helical) span residues 3423–3443, 3449–3469, 3474–3494, 3517–3537, 3569–3589, 3592–3612, and 3620–3640; these read FAIIFVLTILILLQLAQWTFV, TLLLPLIGFVAVCVGFVSLLI, TYLTVYLLPVAMVTAYYNFQY, VIGTDLLTMLIISVACTLLSV, VAISYLTFMVSVFTNYTGVAC, LYAAQFMVWVLKFLDPTILLL, and LVCYLLVGYLCTCYFGVFNLI. The HD3 stretch occupies residues 3423 to 3640; sequence FAIIFVLTIL…TCYFGVFNLI (218 aa). The RdRp Nsp7 cofactor domain occupies 3700 to 3782; sequence SNMTDLKCTS…SILENNSVLQ (83 aa). The RdRp Nsp8 cofactor domain occupies 3783 to 3982; the sequence is AVASEFSNLS…QQATSPVKLQ (200 aa). The region spanning 3983 to 4094 is the Nsp9 ssRNA-binding domain; it reads NNELMPQTVK…GTLACTVRLH (112 aa). Residues 4095–4233 enclose the ExoN/MTase coactivator domain; it reads AGSATEVASN…CSSLREINLQ (139 aa). 8 residues coordinate Zn(2+): Cys-4168, Cys-4171, His-4177, Cys-4184, Cys-4211, Cys-4214, Cys-4222, and Cys-4224. 2 zinc fingers span residues 4168–4184 and 4211–4224; these read CLYCRCHIEHPGASGVC and CAVCNMWQGYGCPC. A NiRAN domain is found at 4239-4494; the sequence is FLNRVRGTSG…AAECHVDGDF (256 aa). The Mn(2+) site is built by Asn-4442 and Asp-4451. A Nsp12 Interface domain is found at 4499–4597; the sequence is RVWDICKYDY…MNQDIRQHAQ (99 aa). Zn(2+)-binding residues include His-4528, Cys-4534, Cys-4539, Cys-4543, and Cys-4720. The Nsp12 RNA-dependent RNA polymerase domain maps to 4598-5165; the sequence is RLSLRELLVY…NMYMESATLQ (568 aa). A rdRp Fingers N-ter region spans residues 4600 to 4814; that stretch reads SLRELLVYAA…HQKMLKSIAA (215 aa). The tract at residues 4815-4853 is rdRp Palm N-ter; that stretch reads ARGASVVIGTTKFYGGWNRMLRTLCEGVENPHLMGWDYP. Positions 4845–5007 constitute a RdRp catalytic domain; that stretch reads PHLMGWDYPK…CYNADYAQKG (163 aa). Positions 4854-4912 are rdRp Fingers C-ter; that stretch reads KCDRAMPNLLRIFASLILARKHATCCNASERFYRLANECAQVLSEMVLCGGGFYVKPGG. Residues His-4875, Cys-4878, and Cys-4879 each contribute to the Zn(2+) site. The tract at residues 4913–5048 is rdRp Palm C-ter; the sequence is TSSGDSTTAY…TKGPHEFCSQ (136 aa). Residues Ser-4992, Asp-4993, and Asp-4994 contribute to the active site. The segment at 5049 to 5165 is rdRp Thumb; that stretch reads HTMLVDMKGE…NMYMESATLQ (117 aa). The region spanning 5166 to 5278 is the CV ZBD domain; that stretch reads SVGTCVVCNS…ADFNSLATCD (113 aa). Zn(2+) contacts are provided by Cys-5170, Cys-5173, Cys-5181, Cys-5184, Cys-5191, Cys-5194, His-5198, His-5204, Cys-5215, Cys-5220, Cys-5237, and His-5240. The (+)RNA virus helicase ATP-binding domain maps to 5412–5603; that stretch reads TKLVGLYPAM…MVAVGPDIFL (192 aa). 5447–5454 lines the ATP pocket; it reads GPPGTGKS. Residues 5604 to 5778 form the (+)RNA virus helicase C-terminal domain; the sequence is ATCYRCPKEI…VTVGLFKDCA (175 aa). An ExoN domain is found at 5838–6056; that stretch reads LFITREQAIR…RCLAIHDCFC (219 aa). Catalysis depends on residues Asp-5856, Glu-5858, and Glu-5957. Zn(2+) is bound by residues Cys-5973, Cys-5976, Cys-5992, His-5995, His-6026, Cys-6030, and His-6033. Catalysis depends on residues His-6037 and Asp-6042. Residue Cys-6048 coordinates Zn(2+). The N7-MTase domain maps to 6065–6296; that stretch reads YPIIANELAI…NLWSTFVKLQ (232 aa). 6100-6106 is an S-adenosyl-L-methionine binding site; that stretch reads DIGNPKA. Residues 6180–6194 are gpppA-binding; it reads CNGGSLYVNQHAFHT. Zn(2+)-binding residues include Cys-6218, Cys-6242, Cys-6253, and His-6256. The Nsp15 N-terminal oligomerization domain maps to 6297 to 6357; it reads SLENVAYNVL…NVAFELWAKR (61 aa). The AV-Nsp11N/CoV-Nsp15M domain maps to 6358 to 6476; sequence SVNVVPEVKL…YAMRKDGAFV (119 aa). A NendoU domain is found at 6493-6630; the sequence is QPRTQLEIDF…KGGKISTFYP (138 aa). Residues His-6523, His-6537, Lys-6576, Lys-6679, Asp-6763, Lys-6803, and Glu-6836 contribute to the active site. In terms of domain architecture, Nidovirus-type SAM-dependent 2'-O-MTase spans 6635 to 6928; that stretch reads KQDWKPGYSM…DIGVRGVACS (294 aa).

It belongs to the coronaviruses polyprotein 1ab family. In terms of assembly, interacts with host PHB and PHB2. As to quaternary structure, interacts with papain-like protease nsp3 and non-structural protein 6. Monomer. Homodimer. Only the homodimer shows catalytic activity. In terms of assembly, interacts with nsp8 and nsp12 to form the replication-transcription complex (RTC): nsp12, nsp7, two subunits of nsp8, and up to two subunits of nsp13. As to quaternary structure, interacts with nsp7, nsp13 and nsp12 to form the replication-transcription complex (RTC): nsp12, nsp7, two subunits of nsp8, and up to two subunits of nsp13. Interacts with nsp12. In terms of assembly, interacts with proofreading exoribonuclease nsp14 and 2'-O-methyltransferase nsp16; these interactions enhance nsp14 and nsp16 enzymatic activities. As to quaternary structure, interacts with nsp7 and nsp8 to form the replication-transcription complex (RTC): nsp12, nsp7, two subunits of nsp8, and up to two subunits of nsp13. Interacts with nsp9. Interacts with nsp8 to form the replication-transcription complex (RTC): nsp12, nsp7, two subunits of nsp8, and up to two subunits of nsp13. Mn(2+) is required as a cofactor. Requires Mg(2+) as cofactor. Specific enzymatic cleavages in vivo by its own proteases yield mature proteins. 3CL-PRO and PL-PRO proteinases are autocatalytically processed.

It localises to the host membrane. Its subcellular location is the host cytoplasm. The protein localises to the host perinuclear region. It is found in the host endoplasmic reticulum-Golgi intermediate compartment. It catalyses the reaction RNA(n) + a ribonucleoside 5'-triphosphate = RNA(n+1) + diphosphate. The catalysed reaction is ATP + H2O = ADP + phosphate + H(+). It carries out the reaction Thiol-dependent hydrolysis of ester, thioester, amide, peptide and isopeptide bonds formed by the C-terminal Gly of ubiquitin (a 76-residue protein attached to proteins as an intracellular targeting signal).. The enzyme catalyses a 5'-end (N(7)-methyl 5'-triphosphoguanosine)-ribonucleoside in mRNA + S-adenosyl-L-methionine = a 5'-end (N(7)-methyl 5'-triphosphoguanosine)-(2'-O-methyl-ribonucleoside) in mRNA + S-adenosyl-L-homocysteine + H(+). It catalyses the reaction uridylyl-uridylyl-ribonucleotide-RNA = a 3'-end uridylyl-2',3'-cyclophospho-uridine-RNA + a 5'-end dephospho-ribonucleoside-RNA. The catalysed reaction is a 5'-end diphospho-ribonucleoside in mRNA + GTP + H(+) = a 5'-end (5'-triphosphoguanosine)-ribonucleoside in mRNA + diphosphate. It carries out the reaction a 5'-end (5'-triphosphoguanosine)-ribonucleoside in mRNA + S-adenosyl-L-methionine = a 5'-end (N(7)-methyl 5'-triphosphoguanosine)-ribonucleoside in mRNA + S-adenosyl-L-homocysteine. In terms of biological role, the replicase polyprotein of coronaviruses is a multifunctional protein: it contains the activities necessary for the transcription of negative stranded RNA, leader RNA, subgenomic mRNAs and progeny virion RNA as well as proteinases responsible for the cleavage of the polyprotein into functional products. Inhibits host translation by interacting with the 40S ribosomal subunit. The nsp1-40S ribosome complex further induces an endonucleolytic cleavage near the 5'UTR of host mRNAs, targeting them for degradation. Viral mRNAs are not susceptible to nsp1-mediated endonucleolytic RNA cleavage thanks to the presence of a 5'-end leader sequence and are therefore protected from degradation. By suppressing host gene expression, nsp1 facilitates efficient viral gene expression in infected cells and evasion from host immune response. Functionally, may play a role in the modulation of host cell survival signaling pathway by interacting with host PHB and PHB2. Indeed, these two proteins play a role in maintaining the functional integrity of the mitochondria and protecting cells from various stresses. Its function is as follows. Responsible for the cleavages located at the N-terminus of the replicase polyprotein. In addition, PL-PRO possesses a deubiquitinating/deISGylating activity and processes both 'Lys-48'- and 'Lys-63'-linked polyubiquitin chains from cellular substrates. Participates together with nsp4 in the assembly of virally-induced cytoplasmic double-membrane vesicles necessary for viral replication. Antagonizes innate immune induction of type I interferon by blocking the phosphorylation, dimerization and subsequent nuclear translocation of host IRF3. Also prevents host NF-kappa-B signaling. In terms of biological role, participates in the assembly of virally-induced cytoplasmic double-membrane vesicles necessary for viral replication. Cleaves the C-terminus of replicase polyprotein at 11 sites. Recognizes substrates containing the core sequence [ILMVF]-Q-|-[SGACN]. Also able to bind an ADP-ribose-1''-phosphate (ADRP). Functionally, plays a role in the initial induction of autophagosomes from host endoplasmic reticulum. Later, limits the expansion of these phagosomes that are no longer able to deliver viral components to lysosomes. Its function is as follows. Forms a hexadecamer with nsp8 (8 subunits of each) that may participate in viral replication by acting as a primase. Alternatively, may synthesize substantially longer products than oligonucleotide primers. In terms of biological role, forms a hexadecamer with nsp7 (8 subunits of each) that may participate in viral replication by acting as a primase. Alternatively, may synthesize substantially longer products than oligonucleotide primers. Forms a primer, NSP9-pU, which is utilized by the polymerase for the initiation of RNA chains. Interacts with ribosome signal recognition particle RNA (SRP). Together with NSP8, suppress protein integration into the cell membrane, thereby disrupting host immune defenses. Functionally, plays a pivotal role in viral transcription by stimulating both nsp14 3'-5' exoribonuclease and nsp16 2'-O-methyltransferase activities. Therefore plays an essential role in viral mRNAs cap methylation. Its function is as follows. RNA-directed RNA polymerase that catalyzes the transcription of viral genomic and subgenomic RNAs. Acts in complex with nsp7 and nsp8 to transcribe both the minus and positive strands of genomic RNA. The kinase-like NiRAN domain of NSP12 attaches one or more nucleotides to the amino terminus of NSP9, forming a covalent RNA-protein intermediate that serves as transcription/replication primer. Subgenomic RNAs (sgRNAs) are formed by discontinuous transcription: The polymerase has the ability to pause at transcription-regulating sequences (TRS) and jump to the leader TRS, resulting in a major deletion. This creates a series of subgenomic RNAs that are replicated, transcribed and translated. In addition, Nsp12 is a subunit of the viral RNA capping enzyme that catalyzes the RNA guanylyltransferase reaction for genomic and sub-genomic RNAs. Subsequently, the NiRAN domain transfers RNA to GDP, and forms the core cap structure GpppA-RNA. In terms of biological role, multi-functional protein with a zinc-binding domain in N-terminus displaying RNA and DNA duplex-unwinding activities with 5' to 3' polarity. Activity of helicase is dependent on magnesium. Plays a role in viral RNA synthesis through two distinct activities. The N7-guanine methyltransferase activity plays a role in the formation of the cap structure GpppA-RNA. The proofreading exoribonuclease reduces the sensitivity of the virus to RNA mutagens during replication. This activity acts on both ssRNA and dsRNA in a 3'-5' direction. Functionally, plays a role in viral transcription/replication and prevents the simultaneous activation of host cell dsRNA sensors, such as MDA5/IFIH1, OAS, and PKR. Acts by degrading the 5'-polyuridines generated during replication of the poly(A) region of viral genomic and subgenomic RNAs. Catalyzes a two-step reaction in which a 2'3'-cyclic phosphate (2'3'-cP) is first generated by 2'-O transesterification, which is then hydrolyzed to a 3'-phosphate (3'-P). If not degraded, poly(U) RNA would hybridize with poly(A) RNA tails and activate host dsRNA sensors. Its function is as follows. Methyltransferase that mediates mRNA cap 2'-O-ribose methylation to the 5'-cap structure of viral mRNAs. N7-methyl guanosine cap is a prerequisite for binding of nsp16. Therefore plays an essential role in viral mRNAs cap methylation which is essential to evade immune system. In Bat coronavirus HKU9 (BtCoV), this protein is Replicase polyprotein 1ab (rep).